A 308-amino-acid polypeptide reads, in one-letter code: MAAVIDNEMLDDILAQVRPLLGQGKVADYIPALASVSGNKLAIAICTVEGQLYQAGDATERFSIQSISKVLSLVAAMRQYEEDEIWQRVGKDPSGQPFNSLLQLEIEQGKPRNPFINAGALVVCDMLQSRLSAPRQRMLEIVRQLSGVSDLSYDANVARSEFEHSARNAAIAWLMKSFGNFHNDVATVLQNYFHYCALKMSCVELARTFLFLADKGYSSHHAQAVVTPMQARQVNALMATSGMYQNAGEFAWRVGLPAKSGVGGGVVAIVPHEMAIAVWSPELDDTGNSLAGVAVLEKLTQRLGRSVY.

Residues Ser-66, Asn-117, Glu-161, Asn-168, Tyr-192, Tyr-244, and Val-262 each coordinate substrate.

The protein belongs to the glutaminase family. Homotetramer.

It catalyses the reaction L-glutamine + H2O = L-glutamate + NH4(+). This chain is Glutaminase, found in Enterobacter sp. (strain 638).